Here is a 1231-residue protein sequence, read N- to C-terminus: Alpha-protein kinase 1 (1231 aa).

ADP-D-glycero-beta-D-manno-heptose is bound by residues Phe61, Gln67, Arg116, 150–153, Asp231, Lys233, 236–237, and Phe295; these read RQAR and ST. Disordered regions lie at residues 508-540, 609-637, 692-739, 767-791, 811-843, and 859-888; these read ERVS…RSWT, GSGQ…SSRA, GSNN…GDVP, TFAP…SPSQ, PDGS…DEEG, and AHRP…PIFD. The span at 509 to 522 shows a compositional bias: polar residues; the sequence is RVSSQDSRSTASSK. The segment covering 524–537 has biased composition (basic and acidic residues); it reads SKKDQGKLQRERGR. Low complexity predominate over residues 700–714; the sequence is SSHSCGSDSWSLSSS. Residues 775-784 are compositionally biased toward acidic residues; the sequence is PEGETAESTD. Residues 1003 to 1223 enclose the Alpha-type protein kinase domain; sequence KYSKKSELWT…ICHRLSLTRP (221 aa).

It belongs to the protein kinase superfamily. Alpha-type protein kinase family. ALPK subfamily. As to expression, widely expressed. Expressed in the retina and in sweat glands, especially in the myoepithelial cells.

It localises to the cytoplasm. The protein localises to the cytosol. It is found in the cytoskeleton. The protein resides in the spindle pole. Its subcellular location is the microtubule organizing center. It localises to the centrosome. The protein localises to the cell projection. It is found in the cilium. It catalyses the reaction L-seryl-[protein] + ATP = O-phospho-L-seryl-[protein] + ADP + H(+). The enzyme catalyses L-threonyl-[protein] + ATP = O-phospho-L-threonyl-[protein] + ADP + H(+). Serine/threonine-protein kinase activity is stimulated upon ADP-D-glycero-beta-D-manno-heptose (ADP-Heptose)-binding. In terms of biological role, serine/threonine-protein kinase that detects bacterial pathogen-associated molecular pattern metabolites (PAMPs) and initiates an innate immune response, a critical step for pathogen elimination and engagement of adaptive immunity. Specifically recognizes and binds ADP-D-glycero-beta-D-manno-heptose (ADP-Heptose), a potent PAMP present in all Gram-negative and some Gram-positive bacteria. ADP-Heptose-binding stimulates its kinase activity to phosphorylate and activate TIFA, triggering pro-inflammatory NF-kappa-B signaling. May be involved in monosodium urate monohydrate (MSU)-induced inflammation by mediating phosphorylation of unconventional myosin MYO9A. May also play a role in apical protein transport by mediating phosphorylation of unconventional myosin MYO1A. May play a role in ciliogenesis. In Mus musculus (Mouse), this protein is Alpha-protein kinase 1.